A 334-amino-acid chain; its full sequence is Ribosomal RNA small subunit methyltransferase H (334 aa).

Residues 53–55, D72, F99, D122, and H129 each bind S-adenosyl-L-methionine; that span reads GGH.

It belongs to the methyltransferase superfamily. RsmH family.

The protein localises to the cytoplasm. It catalyses the reaction cytidine(1402) in 16S rRNA + S-adenosyl-L-methionine = N(4)-methylcytidine(1402) in 16S rRNA + S-adenosyl-L-homocysteine + H(+). Specifically methylates the N4 position of cytidine in position 1402 (C1402) of 16S rRNA. The protein is Ribosomal RNA small subunit methyltransferase H of Leptospira interrogans serogroup Icterohaemorrhagiae serovar Lai (strain 56601).